A 284-amino-acid polypeptide reads, in one-letter code: 4-hydroxybenzoate octaprenyltransferase (284 aa).

9 helical membrane passes run 19–39 (IPIL…SHGL), 42–62 (ISYL…GCII), 85–105 (GQLS…VAFI), 107–127 (VLFL…LAIL), 134–154 (FFAI…FMAF), 165–185 (AWIF…IYAL), 211–231 (ILLF…YCDF), 233–253 (SFFY…YFLY), and 261–281 (CINA…IAVI).

This sequence belongs to the UbiA prenyltransferase family. Mg(2+) is required as a cofactor.

It is found in the cell inner membrane. The enzyme catalyses all-trans-octaprenyl diphosphate + 4-hydroxybenzoate = 4-hydroxy-3-(all-trans-octaprenyl)benzoate + diphosphate. The protein operates within cofactor biosynthesis; ubiquinone biosynthesis. Functionally, catalyzes the prenylation of para-hydroxybenzoate (PHB) with an all-trans polyprenyl group. Mediates the second step in the final reaction sequence of ubiquinone-8 (UQ-8) biosynthesis, which is the condensation of the polyisoprenoid side chain with PHB, generating the first membrane-bound Q intermediate 3-octaprenyl-4-hydroxybenzoate. This chain is 4-hydroxybenzoate octaprenyltransferase, found in Francisella tularensis subsp. tularensis (strain FSC 198).